Consider the following 519-residue polypeptide: 2,3-bisphosphoglycerate-independent phosphoglycerate mutase (519 aa).

Residues Asp-18 and Ser-68 each coordinate Mn(2+). The active-site Phosphoserine intermediate is the Ser-68. Residues His-129, 159–160, Arg-191, Arg-197, 267–270, and Lys-341 each bind substrate; these read RD and RADR. Mn(2+)-binding residues include Asp-408, His-412, Asp-449, His-450, and His-468.

Belongs to the BPG-independent phosphoglycerate mutase family. Monomer. Mn(2+) serves as cofactor.

It catalyses the reaction (2R)-2-phosphoglycerate = (2R)-3-phosphoglycerate. The protein operates within carbohydrate degradation; glycolysis; pyruvate from D-glyceraldehyde 3-phosphate: step 3/5. Functionally, catalyzes the interconversion of 2-phosphoglycerate and 3-phosphoglycerate. This Coxiella burnetii (strain RSA 493 / Nine Mile phase I) protein is 2,3-bisphosphoglycerate-independent phosphoglycerate mutase.